A 403-amino-acid chain; its full sequence is Phosphoglycerate kinase (403 aa).

Residues Asp-21–Asn-23, Arg-36, His-59–Arg-62, Arg-119, and Arg-159 contribute to the substrate site. Residues Lys-214, Gly-301, Glu-332, and Gly-359 to Ser-362 each bind ATP.

The protein belongs to the phosphoglycerate kinase family. As to quaternary structure, monomer.

The protein localises to the cytoplasm. It catalyses the reaction (2R)-3-phosphoglycerate + ATP = (2R)-3-phospho-glyceroyl phosphate + ADP. Its pathway is carbohydrate degradation; glycolysis; pyruvate from D-glyceraldehyde 3-phosphate: step 2/5. This is Phosphoglycerate kinase from Lactobacillus acidophilus (strain ATCC 700396 / NCK56 / N2 / NCFM).